We begin with the raw amino-acid sequence, 191 residues long: A-type ATP synthase subunit E (191 aa).

Belongs to the V-ATPase E subunit family. Has multiple subunits with at least A(3), B(3), C, D, E, F, H, I and proteolipid K(x). In terms of processing, the N-terminus is blocked.

It localises to the cell membrane. Its function is as follows. Component of the A-type ATP synthase that produces ATP from ADP in the presence of a proton gradient across the membrane. This chain is A-type ATP synthase subunit E, found in Sulfurisphaera tokodaii (strain DSM 16993 / JCM 10545 / NBRC 100140 / 7) (Sulfolobus tokodaii).